The primary structure comprises 847 residues: Rho GTPase-activating protein 12 (847 aa).

An SH3 domain is found at 12–74; that stretch reads PGQAYIEVEY…PAQYVKEVTR (63 aa). Residues 110–241 form a disordered region; it reads LPELSSFGKP…PPNQGRPDSP (132 aa). 2 stretches are compositionally biased toward polar residues: residues 117 to 174 and 191 to 200; these read GKPS…QNRT and TSFSQEQSCD. S165 bears the Phosphoserine mark. Residues S201, S213, and S215 each carry the phosphoserine modification. The segment covering 224–234 has biased composition (polar residues); sequence TEQIRATTPPN. T230 and T231 each carry phosphothreonine. The residue at position 240 (S240) is a Phosphoserine. Y243 carries the phosphotyrosine modification. 2 WW domains span residues 265 to 298 and 358 to 391; these read IQIN…PPRW and DYTN…LPKY. Residues 293 to 317 form a disordered region; sequence WKPPRWTRDASISKGDFQSPGDQEL. Disordered stretches follow at residues 428 to 466 and 591 to 625; these read DTND…DQEK and PDSP…SEQK. The span at 445-461 shows a compositional bias: polar residues; the sequence is NESSPSSPKHQDTASSP. Residues 463–575 form the PH domain; it reads DQEKYGLLNV…WFKVLSSTIN (113 aa). The residue at position 593 (S593) is a Phosphoserine. The span at 595–610 shows a compositional bias: basic and acidic residues; sequence GIEKHDKEKEQKDPKK. The Rho-GAP domain maps to 657-845; it reads SNLANLCQRE…LILLELSSIF (189 aa).

In terms of biological role, GTPase activator for the Rho-type GTPases by converting them to an inactive GDP-bound state. The protein is Rho GTPase-activating protein 12 (ARHGAP12) of Macaca fascicularis (Crab-eating macaque).